Consider the following 315-residue polypeptide: MEKESEIQSLPPTRRYTISLALPISSLNVAYNLQLKTSFVWKISRIVSLYGIDEIILLEDPEYVQNTQVHTLSSDAYLKDPTKFLTDLLCYFETPFFMRKELFPLNPHLKYTSCFPLLPLRNDKASTVNIEFPYREGIVTHPSPQAKNKYIINAGLSHNVIVSSPSVLAPRTRVTVRLKAQSPNEEGQLQGDIVSFSAPREKGGHYWGYKVRSCLSSQLCKSSPYKGGYDFVVQINSQTSAITSKELEASLPSSFRHAVLVLQDNVVQKELVDSTAKSISFNPFPVSFLNDPIPEEILLAAMTRLSDMLLMHGRR.

The protein belongs to the class IV-like SAM-binding methyltransferase superfamily.

The protein resides in the cytoplasm. It localises to the nucleus. This Schizosaccharomyces pombe (strain 972 / ATCC 24843) (Fission yeast) protein is Putative methyltransferase SPBC8D2.16c.